Consider the following 542-residue polypeptide: MGNQSLVVLTESKGEYENETELPVKKSSRDNNIGESLTATAFTQSEDEMVDSNQKWQNPNYFKYAWQEYLFIFTCMISQLLNQAGTTQTLSIMNILSDSFGSEGNSKSWLMASFPLVSGSFILISGRLGDIYGLKKMLLVGYVLVIIWSLICGITKYSGSDTFFIISRAFQGLGIAFVLPNVLGIIGNIYVGGTFRKNIVISFVGAMAPIGATLGCLFAGLIGTEDPKQWPWAFYAYSIAAFINFVLSIYAIPSTIPTNIHHFSMDWIGSVLGVIGLILLNFVWNQAPISGWNQAYIIVILIISVIFLVVFIIYEIRFAKTPLLPRAVIKDRHMIQIMLALFFGWGSFGIFTFYYFQFQLNIRQYTALWAGGTYFMFLIWGIIAALLVGFTIKNVSPSVFLFFSMVAFNVGSIMASVTPVHETYFRTQLGTMIILSFGMDLSFPASSIIFSDNLPMEYQGMAGSLVNTVVNYSMSLCLGMGATVETQVNSDGKHLLKGYRGAQYLGIGLASLACMISGLYMVESFIKGRRARAAAEYDCTVA.

At 1–108 (MGNQSLVVLT…SFGSEGNSKS (108 aa)) the chain is on the cytoplasmic side. Residues 109–129 (WLMASFPLVSGSFILISGRLG) traverse the membrane as a helical segment. At 130 to 136 (DIYGLKK) the chain is on the extracellular side. Residues 137–157 (MLLVGYVLVIIWSLICGITKY) traverse the membrane as a helical segment. At 158 to 172 (SGSDTFFIISRAFQG) the chain is on the cytoplasmic side. The chain crosses the membrane as a helical span at residues 173 to 193 (LGIAFVLPNVLGIIGNIYVGG). Residues 194 to 198 (TFRKN) lie on the Extracellular side of the membrane. The helical transmembrane segment at 199-219 (IVISFVGAMAPIGATLGCLFA) threads the bilayer. The Cytoplasmic portion of the chain corresponds to 220-231 (GLIGTEDPKQWP). Residues 232–252 (WAFYAYSIAAFINFVLSIYAI) form a helical membrane-spanning segment. The Extracellular portion of the chain corresponds to 253–262 (PSTIPTNIHH). A helical membrane pass occupies residues 263 to 283 (FSMDWIGSVLGVIGLILLNFV). At 284–295 (WNQAPISGWNQA) the chain is on the cytoplasmic side. A helical transmembrane segment spans residues 296–316 (YIIVILIISVIFLVVFIIYEI). Topologically, residues 317-333 (RFAKTPLLPRAVIKDRH) are extracellular. A helical transmembrane segment spans residues 334–354 (MIQIMLALFFGWGSFGIFTFY). Topologically, residues 355-371 (YFQFQLNIRQYTALWAG) are cytoplasmic. Residues 372–392 (GTYFMFLIWGIIAALLVGFTI) form a helical membrane-spanning segment. Topologically, residues 393-399 (KNVSPSV) are extracellular. Residues 400-420 (FLFFSMVAFNVGSIMASVTPV) form a helical membrane-spanning segment. Residues 421-429 (HETYFRTQL) are Cytoplasmic-facing. The chain crosses the membrane as a helical span at residues 430 to 450 (GTMIILSFGMDLSFPASSIIF). Residues 451 to 505 (SDNLPMEYQGMAGSLVNTVVNYSMSLCLGMGATVETQVNSDGKHLLKGYRGAQYL) lie on the Extracellular side of the membrane. An N-linked (GlcNAc...) asparagine glycan is attached at N471. Residues 506–526 (GIGLASLACMISGLYMVESFI) form a helical membrane-spanning segment. Over 527–542 (KGRRARAAAEYDCTVA) the chain is Cytoplasmic.

Belongs to the major facilitator superfamily.

The protein resides in the membrane. In terms of biological role, putative component of the machinery responsible for pumping aminotriazole (and possibly other toxic compounds) out of the cell. Probable ATP-dependent export permease. Appears to confer resistance only to aminotriazole. This Saccharomyces cerevisiae (strain ATCC 204508 / S288c) (Baker's yeast) protein is Aminotriazole resistance protein (ATR1).